A 788-amino-acid chain; its full sequence is Autophagy-related protein 9 (788 aa).

Residues 1–171 (MTDKSTFLSV…EAYMYYTGKG (171 aa)) lie on the Cytoplasmic side of the membrane. A compositionally biased stretch (basic and acidic residues) spans 32-42 (ILRRVEEEHAQ). A disordered region spans residues 32–127 (ILRRVEEEHA…TGVANGGLPR (96 aa)). Over residues 44 to 58 (SDNSNSDNDSGNDSD) the composition is skewed to low complexity. Residues 101 to 112 (SFAQGTKTQTPI) are compositionally biased toward polar residues. Residues 172–192 (LVSIILSRVLNMSTIMFVVVF) traverse the membrane as a helical segment. Over 193-222 (STYLGSCIDYSKIKGSRTLDEVHVKQCYAK) the chain is Lumenal. A helical membrane pass occupies residues 223 to 243 (LGSFHVFVLWTFFVLWFMKLF). The Cytoplasmic segment spans residues 244–390 (QYVKDIRRLV…QILSTGLRRR (147 aa)). Residue phenylalanine 391 is an intramembrane region. Residues 392–479 (VFAAIMNVVF…PKEKTALVSK (88 aa)) lie on the Cytoplasmic side of the membrane. The helical transmembrane segment at 480–500 (FVSFIAGSFAAVLGIASLIDP) threads the bilayer. Residues 501–512 (ELFLMFEISANR) are Lumenal-facing. The chain crosses the membrane as a helical span at residues 513–533 (TVLFYIGVFGSILAVSRSLIP). At 534-579 (EETLVFDPEISLRYVAEFTHYLPPEWEGKLHTEQVKNEFSLMYEMR) the chain is on the cytoplasmic side. An intramembrane segment occupies 580–600 (LIILLKELASIFLAPFILYYS). Topologically, residues 601–788 (LTQSCDDIVD…KKTDNMNLGA (188 aa)) are cytoplasmic. Residues 715–736 (LSPAAPTATTATSGTATGAAPR) are disordered. Low complexity predominate over residues 716 to 734 (SPAAPTATTATSGTATGAA).

Belongs to the ATG9 family. As to quaternary structure, homotrimer; forms a homotrimer with a central pore that forms a path between the two membrane leaflets. In terms of processing, phosphorylated by ATG1. ATG1 phosphorylation is required for preautophagosome elongation.

The protein localises to the preautophagosomal structure membrane. The protein resides in the cytoplasmic vesicle membrane. It is found in the golgi apparatus membrane. Its subcellular location is the endoplasmic reticulum membrane. The enzyme catalyses a 1,2-diacyl-sn-glycero-3-phosphocholine(in) = a 1,2-diacyl-sn-glycero-3-phosphocholine(out). It catalyses the reaction a 1,2-diacyl-sn-glycero-3-phospho-L-serine(in) = a 1,2-diacyl-sn-glycero-3-phospho-L-serine(out). It carries out the reaction a 1,2-diacyl-sn-glycero-3-phosphoethanolamine(in) = a 1,2-diacyl-sn-glycero-3-phosphoethanolamine(out). The catalysed reaction is a 1,2-diacyl-sn-glycero-3-phospho-(1D-myo-inositol-3-phosphate)(in) = a 1,2-diacyl-sn-glycero-3-phospho-(1D-myo-inositol-3-phosphate)(out). Phospholipid scramblase involved in autophagy and cytoplasm to vacuole transport (Cvt) vesicle formation. Cycles between the preautophagosomal structure/phagophore assembly site (PAS) and the cytoplasmic vesicle pool and supplies membrane for the growing autophagosome. Lipid scramblase activity plays a key role in preautophagosomal structure/phagophore assembly by distributing the phospholipids that arrive through ATG2 from the cytoplasmic to the luminal leaflet of the bilayer, thereby driving autophagosomal membrane expansion. Required for mitophagy. Also involved in endoplasmic reticulum-specific autophagic process and is essential for the survival of cells subjected to severe ER stress. Different machineries are required for anterograde trafficking to the PAS during either the Cvt pathway or bulk autophagy and for retrograde trafficking. The sequence is that of Autophagy-related protein 9 from Yarrowia lipolytica (strain CLIB 122 / E 150) (Yeast).